The chain runs to 431 residues: RNA-binding motif, single-stranded-interacting protein 3 (431 aa).

The tract at residues 28–53 (YAPAPHPMAPPSPSTNSSSNSSGEQL) is disordered. Residues 31-40 (APHPMAPPSP) show a composition bias toward pro residues. RRM domains lie at 56-129 (TNLY…MAKQ) and 135-220 (TNLY…FADG). Disordered stretches follow at residues 220-242 (GGQK…PREG) and 393-431 (TSPQ…QSKP). Residues 401-411 (SSQDSSGQQQQ) show a composition bias toward low complexity.

It is found in the cytoplasm. Binds poly(A) and poly(U) oligoribonucleotides. This chain is RNA-binding motif, single-stranded-interacting protein 3 (Rbms3), found in Mus musculus (Mouse).